A 152-amino-acid polypeptide reads, in one-letter code: Transposase for insertion sequence element IS200 (152 aa).

Residues histidine 61 and histidine 63 each contribute to the Mg(2+) site. Tyrosine 125 serves as the catalytic Nucleophile. Glutamine 129 lines the Mg(2+) pocket.

It belongs to the transposase 17 family. In terms of assembly, homodimer. Requires Mg(2+) as cofactor.

Its function is as follows. Transposase responsible for transposition of the IS200 insertion sequence (IS) element. Transposition occurs in 2 main steps, excision from the donor DNA 'top strand' into a single strand circle and its subsequent reinsertion into the DNA target. This increases the copy number of the IS. This is Transposase for insertion sequence element IS200 (tnpA1) from Salmonella typhi.